The sequence spans 715 residues: ATP-dependent zinc metalloprotease YME1L1 (715 aa).

At 1–237 (MFSLSSTVQP…TNDSLRRTRL (237 aa)) the chain is on the mitochondrial matrix side. A disordered region spans residues 34–54 (NTPVSQKQHRDTVPEHEAPSS). The segment covering 41–52 (QHRDTVPEHEAP) has biased composition (basic and acidic residues). Residues 238 to 258 (ILFVLLLFGIYGLLKNPFLSV) form a helical membrane-spanning segment. Over 259–715 (RFRTTTGLDS…VLEGKKLEVR (457 aa)) the chain is Mitochondrial intermembrane. ATP is bound by residues V283, T325, G326, K327, T328, and L329. H541 contacts Zn(2+). E542 is a catalytic residue. Residues H545 and D619 each contribute to the Zn(2+) site.

The protein in the N-terminal section; belongs to the AAA ATPase family. This sequence in the C-terminal section; belongs to the peptidase M41 family. In terms of assembly, homohexamer; may also form heterohexamers. Exists in several complexes of 600-1100 kDa. Interacts with AFG1L. Zn(2+) serves as cofactor. Proteolytically processed by mitochondrial processing peptidase (MPP) to generate the mature form. Degraded in an OMA1-dependent manner in response to oxidative stress. Detected in heart and skeletal muscle (at protein level).

The protein localises to the mitochondrion inner membrane. It is found in the mitochondrion. It catalyses the reaction ATP + H2O = ADP + phosphate + H(+). Functionally, ATP-dependent metalloprotease that catalyzes the degradation of folded and unfolded proteins with a suitable degron sequence in the mitochondrial intermembrane region. Plays an important role in regulating mitochondrial morphology and function by cleaving OPA1 at position S2, giving rise to a form of OPA1 that promotes maintenance of normal mitochondrial structure and mitochondrial protein metabolism. Ensures cell proliferation, maintains normal cristae morphology and complex I respiration activity, promotes antiapoptotic activity and protects mitochondria from the accumulation of oxidatively damaged membrane proteins. Required to control the accumulation of nonassembled respiratory chain subunits (NDUFB6, OX4 and ND1). Involved in the mitochondrial adaptation in response to various signals, such as stress or developmental cues, by mediating degradation of mitochondrial proteins to rewire the mitochondrial proteome. Catalyzes degradation of mitochondrial proteins, such as translocases, lipid transfer proteins and metabolic enzymes in response to nutrient starvation in order to limit mitochondrial biogenesis: mechanistically, YME1L is activated by decreased phosphatidylethanolamine levels caused by LPIN1 activity in response to mTORC1 inhibition. Acts as a regulator of adult neural stem cell self-renewal by promoting mitochondrial proteome rewiring, preserving neural stem and progenitor cells self-renewal. Required for normal, constitutive degradation of PRELID1. Catalyzes the degradation of OMA1 in response to membrane depolarization. Mediates degradation of TIMM17A downstream of the integrated stress response (ISR). Catalyzes degradation of MICU1 when MICU1 is not assembled via an interchain disulfide. The polypeptide is ATP-dependent zinc metalloprotease YME1L1 (Yme1l1) (Mus musculus (Mouse)).